The following is a 362-amino-acid chain: Leucoanthocyanidin dioxygenase (362 aa).

A disordered region spans residues methionine 1–isoleucine 23. The 100-residue stretch at leucine 214 to proline 313 folds into the Fe2OG dioxygenase domain. Histidine 238, aspartate 240, and histidine 294 together coordinate Fe cation. Arginine 304 is an active-site residue.

Belongs to the iron/ascorbate-dependent oxidoreductase family. Fe cation serves as cofactor. It depends on L-ascorbate as a cofactor. In terms of tissue distribution, expressed in red but not in green forma of P.frutescens. In red forma, it is predominantly expressed in stems and leaves, but not in roots.

The catalysed reaction is a (2R,3S,4S)-leucoanthocyanidin + 2-oxoglutarate + O2 = a 4-H-anthocyanidin with a 3-hydroxy group + succinate + CO2 + 2 H2O. Its pathway is pigment biosynthesis; anthocyanin biosynthesis. In terms of biological role, oxidation of leucoanthocyanidins into anthocyanidins. The polypeptide is Leucoanthocyanidin dioxygenase (ANS) (Perilla frutescens (Beefsteak mint)).